The sequence spans 413 residues: Multifunctional CCA protein (413 aa).

ATP contacts are provided by Gly-8 and Arg-11. 2 residues coordinate CTP: Gly-8 and Arg-11. The Mg(2+) site is built by Asp-21 and Asp-23. Positions 91, 143, and 146 each coordinate ATP. Residues Arg-91, Arg-143, and Arg-146 each coordinate CTP. In terms of domain architecture, HD spans 232–333; sequence TGVHVMMVVD…VRFFERTDAL (102 aa).

The protein belongs to the tRNA nucleotidyltransferase/poly(A) polymerase family. Bacterial CCA-adding enzyme type 1 subfamily. In terms of assembly, monomer. Can also form homodimers and oligomers. Requires Mg(2+) as cofactor. The cofactor is Ni(2+).

The enzyme catalyses a tRNA precursor + 2 CTP + ATP = a tRNA with a 3' CCA end + 3 diphosphate. The catalysed reaction is a tRNA with a 3' CCA end + 2 CTP + ATP = a tRNA with a 3' CCACCA end + 3 diphosphate. In terms of biological role, catalyzes the addition and repair of the essential 3'-terminal CCA sequence in tRNAs without using a nucleic acid template. Adds these three nucleotides in the order of C, C, and A to the tRNA nucleotide-73, using CTP and ATP as substrates and producing inorganic pyrophosphate. tRNA 3'-terminal CCA addition is required both for tRNA processing and repair. Also involved in tRNA surveillance by mediating tandem CCA addition to generate a CCACCA at the 3' terminus of unstable tRNAs. While stable tRNAs receive only 3'-terminal CCA, unstable tRNAs are marked with CCACCA and rapidly degraded. The protein is Multifunctional CCA protein of Burkholderia multivorans (strain ATCC 17616 / 249).